A 387-amino-acid chain; its full sequence is Flap endonuclease 1 (387 aa).

Residues 1–104 (MGIKGLSQLI…GELEKRKERQ (104 aa)) form an N-domain region. Position 34 (Asp34) interacts with Mg(2+). Arg70 contributes to the DNA binding site. 5 residues coordinate Mg(2+): Asp86, Glu158, Glu160, Asp179, and Asp181. An I-domain region spans residues 122 to 253 (KMVMWNKRTT…KKALAMIKKY (132 aa)). Residue Glu158 coordinates DNA. The DNA site is built by Gly231 and Asp233. Asp233 is a Mg(2+) binding site. The tract at residues 332 to 387 (SSRGKPTQTRLDGFFTPVASSSTTKKKAPAKKDDKKSATDKKRKAADASTSSKKKK) is disordered. Residues 338–346 (TQTRLDGFF) are interaction with PCNA. The span at 361-371 (AKKDDKKSATD) shows a compositional bias: basic and acidic residues. Positions 378–387 (DASTSSKKKK) are enriched in low complexity.

The protein belongs to the XPG/RAD2 endonuclease family. FEN1 subfamily. As to quaternary structure, interacts with PCNA. Three molecules of FEN1 bind to one PCNA trimer with each molecule binding to one PCNA monomer. PCNA stimulates the nuclease activity without altering cleavage specificity. Mg(2+) is required as a cofactor. Phosphorylated. Phosphorylation upon DNA damage induces relocalization to the nuclear plasma.

It is found in the nucleus. The protein localises to the nucleolus. Its subcellular location is the nucleoplasm. The protein resides in the mitochondrion. Functionally, structure-specific nuclease with 5'-flap endonuclease and 5'-3' exonuclease activities involved in DNA replication and repair. During DNA replication, cleaves the 5'-overhanging flap structure that is generated by displacement synthesis when DNA polymerase encounters the 5'-end of a downstream Okazaki fragment. It enters the flap from the 5'-end and then tracks to cleave the flap base, leaving a nick for ligation. Also involved in the long patch base excision repair (LP-BER) pathway, by cleaving within the apurinic/apyrimidinic (AP) site-terminated flap. Acts as a genome stabilization factor that prevents flaps from equilibrating into structures that lead to duplications and deletions. Also possesses 5'-3' exonuclease activity on nicked or gapped double-stranded DNA, and exhibits RNase H activity. Also involved in replication and repair of rDNA and in repairing mitochondrial DNA. The protein is Flap endonuclease 1 of Naegleria gruberi (Amoeba).